We begin with the raw amino-acid sequence, 253 residues long: Retinoic acid early-inducible protein 1-beta (253 aa).

An N-terminal signal peptide occupies residues 1 to 28; it reads MAKAAVTKRHHFMIQKLLILLSYGYTNG. Cys37 and Cys56 are oxidised to a cystine. Asn38, Asn70, Asn83, Asn143, and Asn156 each carry an N-linked (GlcNAc...) asparagine glycan. Cys90 and Cys190 are joined by a disulfide. The disordered stretch occupies residues 198 to 230; the sequence is LKQSKEKPRSTSRSPSITQLTSTSPLPPPSHST. A compositionally biased stretch (low complexity) spans 211-221; sequence SPSITQLTSTS. Ser229 carries GPI-anchor amidated serine lipidation. A propeptide spans 230–253 (removed in mature form); the sequence is TSKKGFISVGLIFISLLFAFAFAM.

Belongs to the NKG2D ligand family. Glycosylated. As to expression, expressed predominantly in embryonic brain.

The protein resides in the cell membrane. Functionally, acts as a ligand for KLRK1. This is Retinoic acid early-inducible protein 1-beta (Raet1b) from Mus musculus (Mouse).